The sequence spans 142 residues: MAKKVQAYVKLQVAAGMANPSPPVGPALGQQGVNIMEFCKAFNAKTESIEKGLPIPVVITVYSDRSFTFVTKTPPAAVLLKKAAGIKSGSGVPNKDKVGKVTSAQVREIAETKAADMTGSDVDAMMRSIEGTAHSMGLVVEG.

The protein belongs to the universal ribosomal protein uL11 family. As to quaternary structure, part of the ribosomal stalk of the 50S ribosomal subunit. Interacts with L10 and the large rRNA to form the base of the stalk. L10 forms an elongated spine to which L12 dimers bind in a sequential fashion forming a multimeric L10(L12)X complex. Post-translationally, one or more lysine residues are methylated.

In terms of biological role, forms part of the ribosomal stalk which helps the ribosome interact with GTP-bound translation factors. The chain is Large ribosomal subunit protein uL11 from Yersinia pseudotuberculosis serotype O:1b (strain IP 31758).